A 359-amino-acid polypeptide reads, in one-letter code: S-adenosylmethionine:tRNA ribosyltransferase-isomerase (359 aa).

This sequence belongs to the QueA family. In terms of assembly, monomer.

It is found in the cytoplasm. It carries out the reaction 7-aminomethyl-7-carbaguanosine(34) in tRNA + S-adenosyl-L-methionine = epoxyqueuosine(34) in tRNA + adenine + L-methionine + 2 H(+). It participates in tRNA modification; tRNA-queuosine biosynthesis. Its function is as follows. Transfers and isomerizes the ribose moiety from AdoMet to the 7-aminomethyl group of 7-deazaguanine (preQ1-tRNA) to give epoxyqueuosine (oQ-tRNA). The sequence is that of S-adenosylmethionine:tRNA ribosyltransferase-isomerase from Colwellia psychrerythraea (strain 34H / ATCC BAA-681) (Vibrio psychroerythus).